We begin with the raw amino-acid sequence, 733 residues long: MPALGCCVDAAVSPPPGYSFLWDSSLPAPEIFPSGVPPSTNTAVATTTTTHWSPAHSSALYSIDGWGAPYFTVNSSGDISVKPHGTDTLPHQEIDLLKVVKKASDPKNLGGLGLQFPLVVRFPDILKNRLESLQSVFDYAVQSQGYEAHYQGVYPVKCNQDRFVVEDIVKFGSGFRFGLEAGSKPELLLAMSCLCKGSHEGLLVCNGFKDAEYISLALVARKLMLNTVIVLEQEEELDLVIDISKKMAVRPVIGLRAKLRTKHSGHFGSTSGEKGKFGLTTTQIVRVVKKLEESGMLDCLQLLHFHIGSQIPSTALLADGVGEAAQIYCELVRLGAGMKYIDCGGGLGIDYDGTKSCDSDCSVGYGLQEYASTVVQAVRFVCDRKNVKHPVICSESGRAIVSHHSVLIFEAVSSTTTRSQELSSVDLQSFVEKLNDDARADYRNLSAAAIRGEYDTCVLYADQLKQRCVEQFKDGDLDIEQLAAVDGICDFVSKAIGASDPVRTYHVNLSIFTSVPDFWAIDQLFPIVPIHKLDERPVVRGILSDLTCDSDGKIDKFIGGESSLPLHELGSNGGGGGDGGKYYLGMFLGGAYEEALGGLHNLFGGPSVLRVSQSDSPHSFAVTCAVPGPSCADVLRAMQHEPELMFETLKHRAEEFVHNDDEQEEDKGLAFASLASSLAQSFNNMPYLVTNSSCCLTAAANNGGYYYCNDENIVGVGAESAAAEEELWPYCVA.

The N-terminal 44 residues, 1 to 44 (MPALGCCVDAAVSPPPGYSFLWDSSLPAPEIFPSGVPPSTNTAV), are a transit peptide targeting the chloroplast. An N6-(pyridoxal phosphate)lysine modification is found at Lys-157. Pyridoxal 5'-phosphate is bound by residues Ser-309, Gly-346, and 395 to 398 (ESGR). 460–461 (YA) provides a ligand contact to substrate. Cys-548 functions as the Proton donor; shared with dimeric partner in the catalytic mechanism. Asp-549 lines the substrate pocket. Tyr-592 is a pyridoxal 5'-phosphate binding site.

This sequence belongs to the Orn/Lys/Arg decarboxylase class-II family. SpeA subfamily. Interacts, via its C-terminal internal region, with the tobacco mosaic virus (TMV) replicase helicase region. Mg(2+) serves as cofactor. Requires pyridoxal 5'-phosphate as cofactor.

It is found in the plastid. Its subcellular location is the chloroplast. The enzyme catalyses L-arginine + H(+) = agmatine + CO2. It participates in alkaloid biosynthesis; nicotine biosynthesis. The protein operates within amine and polyamine biosynthesis; agmatine biosynthesis; agmatine from L-arginine: step 1/1. Involved in the biosynthesis of pyridine alkaloid natural products, leading mainly to the production of anabasine, anatabine, nicotine and nornicotine, effective deterrents against herbivores with antiparasitic and pesticide properties (neurotoxins); nornicotine serves as the precursor in the synthesis of the carcinogen compound N'-nitrosonornicotine (NNN). Required for the biosynthesis of putrescine. Catalyzes the first step of polyamine (PA) biosynthesis to produce putrescine from arginine. This Nicotiana tabacum (Common tobacco) protein is Arginine decarboxylase 1A, chloroplastic.